Reading from the N-terminus, the 113-residue chain is Dolichyl-diphosphooligosaccharide--protein glycosyltransferase subunit DAD1 (113 aa).

Ser-2 is subject to N-acetylserine. Topologically, residues 2 to 30 (SASVVSVISRFLEEYLSSTPQRLKLLDAY) are cytoplasmic. A helical transmembrane segment spans residues 31-51 (LLYILLTGALQFGYCLLVGTF). Pro-52 is a topological domain (lumenal). The chain crosses the membrane as a helical span at residues 53–73 (FNSFLSGFISCVGSFILAVRL). Residues 74-92 (RIQINPQNKADFQGISPER) are Cytoplasmic-facing. A helical membrane pass occupies residues 93–113 (AFADFLFASTILHLVVMNFVG).

Belongs to the DAD/OST2 family. As to quaternary structure, component of the oligosaccharyltransferase (OST) complex. OST exists in two different complex forms which contain common core subunits RPN1, RPN2, OST48, OST4, DAD1 and TMEM258, either STT3A or STT3B as catalytic subunits, and form-specific accessory subunits. STT3A complex assembly occurs through the formation of 3 subcomplexes. Subcomplex 1 contains RPN1 and TMEM258, subcomplex 2 contains the STT3A-specific subunits STT3A, DC2/OSTC, and KCP2 as well as the core subunit OST4, and subcomplex 3 contains RPN2, DAD1, and OST48. The STT3A complex can form stable complexes with the Sec61 complex or with both the Sec61 and TRAP complexes.

The protein resides in the endoplasmic reticulum membrane. Its pathway is protein modification; protein glycosylation. Its function is as follows. Subunit of the oligosaccharyl transferase (OST) complex that catalyzes the initial transfer of a defined glycan (Glc(3)Man(9)GlcNAc(2) in eukaryotes) from the lipid carrier dolichol-pyrophosphate to an asparagine residue within an Asn-X-Ser/Thr consensus motif in nascent polypeptide chains, the first step in protein N-glycosylation. N-glycosylation occurs cotranslationally and the complex associates with the Sec61 complex at the channel-forming translocon complex that mediates protein translocation across the endoplasmic reticulum (ER). All subunits are required for a maximal enzyme activity. This is Dolichyl-diphosphooligosaccharide--protein glycosyltransferase subunit DAD1 from Pongo abelii (Sumatran orangutan).